A 312-amino-acid polypeptide reads, in one-letter code: Aspartate carbamoyltransferase catalytic subunit (312 aa).

Carbamoyl phosphate contacts are provided by Arg-58 and Thr-59. Lys-86 contributes to the L-aspartate binding site. Carbamoyl phosphate contacts are provided by Arg-108, His-136, and Gln-139. Arg-169 and Arg-223 together coordinate L-aspartate. Carbamoyl phosphate-binding residues include Gly-264 and Pro-265.

The protein belongs to the aspartate/ornithine carbamoyltransferase superfamily. ATCase family. Heterododecamer (2C3:3R2) of six catalytic PyrB chains organized as two trimers (C3), and six regulatory PyrI chains organized as three dimers (R2).

The catalysed reaction is carbamoyl phosphate + L-aspartate = N-carbamoyl-L-aspartate + phosphate + H(+). Its pathway is pyrimidine metabolism; UMP biosynthesis via de novo pathway; (S)-dihydroorotate from bicarbonate: step 2/3. Catalyzes the condensation of carbamoyl phosphate and aspartate to form carbamoyl aspartate and inorganic phosphate, the committed step in the de novo pyrimidine nucleotide biosynthesis pathway. The sequence is that of Aspartate carbamoyltransferase catalytic subunit from Heliobacterium modesticaldum (strain ATCC 51547 / Ice1).